The sequence spans 542 residues: 3-(3-hydroxy-phenyl)propionate/3-hydroxycinnamic acid hydroxylase (542 aa).

FAD is bound by residues 10–39 and 278–288; these read SVAIVGAGPNGAAMANLLGLYGVDTIVVER and FVAGRVALIGD.

Belongs to the PheA/TfdB FAD monooxygenase family. Requires FAD as cofactor.

The catalysed reaction is 3-(3-hydroxyphenyl)propanoate + NADH + O2 + H(+) = 3-(2,3-dihydroxyphenyl)propanoate + NAD(+) + H2O. The enzyme catalyses (2E)-3-(3-hydroxyphenyl)prop-2-enoate + NADH + O2 + H(+) = (2E)-3-(2,3-dihydroxyphenyl)prop-2-enoate + NAD(+) + H2O. It functions in the pathway aromatic compound metabolism; 3-phenylpropanoate degradation. Its function is as follows. Catalyzes the insertion of one atom of molecular oxygen into position 2 of the phenyl ring of 3-(3-hydroxyphenyl)propionate (3-HPP) and hydroxycinnamic acid (3HCI). This Burkholderia cenocepacia (strain HI2424) protein is 3-(3-hydroxy-phenyl)propionate/3-hydroxycinnamic acid hydroxylase.